Here is a 159-residue protein sequence, read N- to C-terminus: MRRAVCPGSFDPIHNGHLEVIARAAGLFDEVIVAVSTNYAKKYRFPLEERIDMARETLASLRGIVVEPVGEGLLAEYCRQRGVSAIVKGLRSSSDFDYELPMATMNRQLSGVETVFLPTEGHYLHLSSTLIKEVFTLGGNVSDYVPRSVLKRLLAGESS.

Ser-9 serves as a coordination point for substrate. ATP contacts are provided by residues 9-10 (SF) and His-17. Positions 41, 74, and 88 each coordinate substrate. ATP-binding positions include 89–91 (GLR), Glu-99, and 123–129 (YLHLSST).

Belongs to the bacterial CoaD family. As to quaternary structure, homohexamer. The cofactor is Mg(2+).

It is found in the cytoplasm. It catalyses the reaction (R)-4'-phosphopantetheine + ATP + H(+) = 3'-dephospho-CoA + diphosphate. It functions in the pathway cofactor biosynthesis; coenzyme A biosynthesis; CoA from (R)-pantothenate: step 4/5. In terms of biological role, reversibly transfers an adenylyl group from ATP to 4'-phosphopantetheine, yielding dephospho-CoA (dPCoA) and pyrophosphate. This Arthrobacter sp. (strain FB24) protein is Phosphopantetheine adenylyltransferase.